A 397-amino-acid chain; its full sequence is Digeranylgeranylglycerophospholipid reductase 1 (397 aa).

Residues Ala18, Asp37, Cys48, Ala49, Gly51, Arg104, Ala128, Asp284, Gly296, and Ile297 each coordinate FAD.

It belongs to the geranylgeranyl reductase family. DGGGPL reductase subfamily. FAD serves as cofactor.

The enzyme catalyses a 2,3-bis-O-phytanyl-sn-glycerol 1-phospholipid + 8 A = a 2,3-bis-O-(geranylgeranyl)-sn-glycerol 1-phospholipid + 8 AH2. The catalysed reaction is 2,3-bis-O-(phytanyl)-sn-glycerol 1-phosphate + 8 A = 2,3-bis-O-(geranylgeranyl)-sn-glycerol 1-phosphate + 8 AH2. It carries out the reaction CDP-2,3-bis-O-(geranylgeranyl)-sn-glycerol + 8 AH2 = CDP-2,3-bis-O-(phytanyl)-sn-glycerol + 8 A. It catalyses the reaction archaetidylserine + 8 AH2 = 2,3-bis-O-phytanyl-sn-glycero-3-phospho-L-serine + 8 A. It functions in the pathway membrane lipid metabolism; glycerophospholipid metabolism. Its function is as follows. Is involved in the reduction of 2,3-digeranylgeranylglycerophospholipids (unsaturated archaeols) into 2,3-diphytanylglycerophospholipids (saturated archaeols) in the biosynthesis of archaeal membrane lipids. Catalyzes the formation of archaetidic acid (2,3-di-O-phytanyl-sn-glyceryl phosphate) from 2,3-di-O-geranylgeranylglyceryl phosphate (DGGGP) via the hydrogenation of each double bond of the isoprenoid chains. Is also probably able to reduce double bonds of geranyl groups in CDP-2,3-bis-O-(geranylgeranyl)-sn-glycerol and archaetidylserine, thus acting at various stages in the biosynthesis of archaeal membrane lipids. The chain is Digeranylgeranylglycerophospholipid reductase 1 from Methanothermobacter thermautotrophicus (strain ATCC 29096 / DSM 1053 / JCM 10044 / NBRC 100330 / Delta H) (Methanobacterium thermoautotrophicum).